Consider the following 365-residue polypeptide: Phosphate acyltransferase (365 aa).

The protein belongs to the PlsX family. Homodimer. Probably interacts with PlsY.

The protein resides in the cytoplasm. It catalyses the reaction a fatty acyl-[ACP] + phosphate = an acyl phosphate + holo-[ACP]. It functions in the pathway lipid metabolism; phospholipid metabolism. Its function is as follows. Catalyzes the reversible formation of acyl-phosphate (acyl-PO(4)) from acyl-[acyl-carrier-protein] (acyl-ACP). This enzyme utilizes acyl-ACP as fatty acyl donor, but not acyl-CoA. This chain is Phosphate acyltransferase, found in Jannaschia sp. (strain CCS1).